A 60-amino-acid chain; its full sequence is Cytotoxin KJC3 (60 aa).

Intrachain disulfides connect Cys3–Cys21, Cys14–Cys38, Cys42–Cys53, and Cys54–Cys59.

This sequence belongs to the three-finger toxin family. Short-chain subfamily. Type IA cytotoxin sub-subfamily. As to quaternary structure, monomer in solution; Homodimer and oligomer in the presence of negatively charged lipids forming a pore with a size ranging between 20 and 30 Angstroms. As to expression, expressed by the venom gland.

Its subcellular location is the secreted. It is found in the target cell membrane. Shows cytolytic activity on many different cells by forming pore in lipid membranes. In vivo, increases heart rate or kills the animal by cardiac arrest. In addition, it binds to heparin with high affinity, interacts with Kv channel-interacting protein 1 (KCNIP1) in a calcium-independent manner, and binds to integrin alpha-V/beta-3 (ITGAV/ITGB3) with moderate affinity. This chain is Cytotoxin KJC3, found in Naja sputatrix (Malayan spitting cobra).